Reading from the N-terminus, the 379-residue chain is Serine/threonine-protein kinase spe-6 (379 aa).

Positions 26–302 constitute a Protein kinase domain; sequence WKVLRNIYSG…SQAATEHQVT (277 aa). ATP contacts are provided by residues 32 to 40 and Lys-55; that span reads IYSGPFSDV. The Proton acceptor role is filled by Asp-147. Residues 331–379 are disordered; that stretch reads ASAKLDAKDNANESMDIEFDDMPPKEGISKSLSAEKSCTKNVETARTEK. The segment covering 360-372 has biased composition (polar residues); sequence KSLSAEKSCTKNV.

Belongs to the protein kinase superfamily. CK1 Ser/Thr protein kinase family.

It carries out the reaction L-seryl-[protein] + ATP = O-phospho-L-seryl-[protein] + ADP + H(+). It catalyses the reaction L-threonyl-[protein] + ATP = O-phospho-L-threonyl-[protein] + ADP + H(+). Serine/threonine-protein kinase which is involved in spermatogenesis. In spermatocytes, regulates meiosis and the localization and assembly of major sperm protein (MSP) into fibrous bodies. In addition, may suppress the initiation of spermiogenesis downstream of spe-8, spe-12, spe-27 and spe-29. The sequence is that of Serine/threonine-protein kinase spe-6 from Caenorhabditis elegans.